Consider the following 239-residue polypeptide: Serine protease SplC (239 aa).

The N-terminal stretch at 1–36 (MNKNIVIKSMAALAILTSVTGINAAVVEETQQIANA) is a signal peptide. Catalysis depends on charge relay system residues His75, Asp113, and Ser193.

The protein belongs to the peptidase S1B family.

It localises to the secreted. The chain is Serine protease SplC (splC) from Staphylococcus aureus.